The sequence spans 159 residues: MAELDDQFETTDSGASTTYPMQCSALRKNGFVMLKSRPCKIVEMSTSKTGKHGHAKVHMVGIDIFSNKKYEDICPSTHNMDVPNVKREDLQLIAISDDSFLTLMTESGDLREDLKVPEGELGEQLRLDFDSGKDLLCTVLKACGEECVIAIKTNTALDK.

Residue Lys51 is modified to Hypusine.

It belongs to the eIF-5A family. Post-translationally, lys-51 undergoes hypusination, a unique post-translational modification that consists in the addition of a butylamino group from spermidine to lysine side chain, leading to the formation of the unusual amino acid hypusine. eIF-5As are the only known proteins to undergo this modification, which is essential for their function.

It localises to the cytoplasm. In terms of biological role, translation factor that promotes translation elongation and termination, particularly upon ribosome stalling at specific amino acid sequence contexts. Binds between the exit (E) and peptidyl (P) site of the ribosome and promotes rescue of stalled ribosome: specifically required for efficient translation of polyproline-containing peptides as well as other motifs that stall the ribosome. Acts as a ribosome quality control (RQC) cofactor by joining the RQC complex to facilitate peptidyl transfer during CAT tailing step. Functions as a regulator of autophagy. This is Eukaryotic translation initiation factor 5A from Drosophila melanogaster (Fruit fly).